The sequence spans 336 residues: HTH-type transcriptional regulator RafR (336 aa).

The HTH lacI-type domain maps to 2 to 55 (SLKAIATTLGISVTTVSRALGGFSDVAASTRERVEAEARRRGYRPNTQARRLKT). Residues 3–22 (LKAIATTLGISVTTVSRALG) constitute a DNA-binding region (H-T-H motif).

Homodimer.

In terms of biological role, repressor that negatively controls the expression of the raffinose (raf) operon by binding to the raf operator (rafO) DNA. Acts by binding to two operator sites, O1 and 02, which flank the -35 raf promoter box. RafR bound to 02 alone results in 45 % repression of transcription, whereas RafR bound to O1 leads to only 6% repression. This Escherichia coli protein is HTH-type transcriptional regulator RafR.